A 60-amino-acid polypeptide reads, in one-letter code: Myrmicitoxin(1)-Pr4c (60 aa).

A signal peptide spans M1–G23. The propeptide occupies E24–S33. The residue at position 59 (Q59) is a Glutamine amide.

This sequence belongs to the formicidae venom clade 2 family. As to expression, expressed by the venom gland.

The protein resides in the secreted. In terms of biological role, toxin that causes a rapid and irreversible paralysis when intrathoracically injected into insects (blowflies). Does not cause spontaneous nocifensive behaviors by intraplantar injection in mice. This chain is Myrmicitoxin(1)-Pr4c, found in Pogonomyrmex rugosus (Desert harvester ant).